Here is a 158-residue protein sequence, read N- to C-terminus: NAD(P)H-quinone oxidoreductase subunit N (158 aa).

It belongs to the complex I NdhN subunit family. NDH-1 can be composed of about 15 different subunits; different subcomplexes with different compositions have been identified which probably have different functions.

It is found in the cellular thylakoid membrane. It catalyses the reaction a plastoquinone + NADH + (n+1) H(+)(in) = a plastoquinol + NAD(+) + n H(+)(out). The catalysed reaction is a plastoquinone + NADPH + (n+1) H(+)(in) = a plastoquinol + NADP(+) + n H(+)(out). Functionally, NDH-1 shuttles electrons from an unknown electron donor, via FMN and iron-sulfur (Fe-S) centers, to quinones in the respiratory and/or the photosynthetic chain. The immediate electron acceptor for the enzyme in this species is believed to be plastoquinone. Couples the redox reaction to proton translocation, and thus conserves the redox energy in a proton gradient. Cyanobacterial NDH-1 also plays a role in inorganic carbon-concentration. The polypeptide is NAD(P)H-quinone oxidoreductase subunit N (Nostoc punctiforme (strain ATCC 29133 / PCC 73102)).